A 171-amino-acid polypeptide reads, in one-letter code: UPF0312 protein SAV2687 (171 aa).

The protein belongs to the UPF0312 family.

The sequence is that of UPF0312 protein SAV2687 from Staphylococcus aureus (strain Mu50 / ATCC 700699).